A 245-amino-acid chain; its full sequence is 14-3-3 protein zeta/delta (245 aa).

At methionine 1 the chain carries N-acetylmethionine. Residue lysine 3 is modified to N6-acetyllysine. Serine 58 bears the Phosphoserine; by PKA mark. Lysine 68 carries the N6-acetyllysine modification. Phosphoserine is present on residues serine 184, serine 207, and serine 210. The residue at position 232 (threonine 232) is a Phosphothreonine; by CK1.

This sequence belongs to the 14-3-3 family. In terms of assembly, homodimer. Heterodimerizes with YWHAE. Homo- and heterodimerization is inhibited by phosphorylation on Ser-58. Interacts with FOXO4, NOXA1, SSH1 ARHGEF2, CDK16 and BSPRY. Interacts with WEE1 (C-terminal). Interacts with MLF1 (phosphorylated form); the interaction retains it in the cytoplasm. Interacts with BAX; the interaction occurs in the cytoplasm. Under stress conditions, MAPK8-mediated phosphorylation releases BAX to mitochondria. Interacts with TP53; the interaction enhances p53 transcriptional activity. The Ser-58 phosphorylated form inhibits this interaction and p53 transcriptional activity. Interacts with ABL1 (phosphorylated form); the interaction retains ABL1 in the cytoplasm. Interacts with PKA-phosphorylated AANAT; the interaction modulates AANAT enzymatic activity by increasing affinity for arylalkylamines and acetyl-CoA and protecting the enzyme from dephosphorylation and proteasomal degradation. It may also prevent thiol-dependent inactivation. Interacts with AKT1; the interaction phosphorylates YWHAZ and modulates dimerization. Interacts with GAB2. Interacts with BCL2L11, SAMSN1 and TLK2. Interacts with phosphorylated RAF1; the interaction is inhibited when YWHAZ is phosphorylated on Thr-232. Interacts with Thr-phosphorylated ITGB2. Interacts with the 'Thr-369' phosphorylated form of DAPK2. Interacts with PI4KB, TBC1D22A and TBC1D22B. Interacts with ZFP36L1 (via phosphorylated form); this interaction occurs in a p38 MAPK- and AKT-signaling pathways. Interacts with SLITRK1. Interacts with AK5, LDB1, MADD, MARK3, PDE1A and SMARCB1. Interacts with YWHAZ. Interacts with MEFV. Interacts with ADAM22 (via C-terminus). In terms of processing, the delta, brain-specific form differs from the zeta form in being phosphorylated. Phosphorylation on Ser-184 by MAPK8; promotes dissociation of BAX and translocation of BAX to mitochondria. Phosphorylation on Thr-232; inhibits binding of RAF1. Phosphorylated on Ser-58 by PKA and protein kinase C delta type catalytic subunit in a sphingosine-dependent fashion. Phosphorylation on Ser-58 by PKA; disrupts homodimerization and heterodimerization with YHAE and TP53.

The protein resides in the cytoplasm. It localises to the melanosome. Adapter protein implicated in the regulation of a large spectrum of both general and specialized signaling pathways. Binds to a large number of partners, usually by recognition of a phosphoserine or phosphothreonine motif. Binding generally results in the modulation of the activity of the binding partner. Promotes cytosolic retention and inactivation of TFEB transcription factor by binding to phosphorylated TFEB. Induces ARHGEF7 activity on RAC1 as well as lamellipodia and membrane ruffle formation. In neurons, regulates spine maturation through the modulation of ARHGEF7 activity. This is 14-3-3 protein zeta/delta (YWHAZ) from Bos taurus (Bovine).